The primary structure comprises 93 residues: YcgL domain-containing protein VSAL_I1068 (93 aa).

One can recognise a YcgL domain in the interval 1–84 (MYCSIYKSSK…PPENLLEKYK (84 aa)).

This chain is YcgL domain-containing protein VSAL_I1068, found in Aliivibrio salmonicida (strain LFI1238) (Vibrio salmonicida (strain LFI1238)).